We begin with the raw amino-acid sequence, 267 residues long: Exosome complex component Rrp42 (267 aa).

It belongs to the RNase PH family. Rrp42 subfamily. In terms of assembly, component of the archaeal exosome complex. Forms a hexameric ring-like arrangement composed of 3 Rrp41-Rrp42 heterodimers. The hexameric ring associates with a trimer of Rrp4 and/or Csl4 subunits.

Its subcellular location is the cytoplasm. Functionally, non-catalytic component of the exosome, which is a complex involved in RNA degradation. Contributes to the structuring of the Rrp41 active site. The sequence is that of Exosome complex component Rrp42 from Methanopyrus kandleri (strain AV19 / DSM 6324 / JCM 9639 / NBRC 100938).